The chain runs to 692 residues: Elongation factor G (692 aa).

One can recognise a tr-type G domain in the interval 8–282 (ENTRNIGIMA…AVLDYLPSPL (275 aa)). Residues 17 to 24 (AHIDAGKT), 81 to 85 (DTPGH), and 135 to 138 (NKMD) each bind GTP.

Belongs to the TRAFAC class translation factor GTPase superfamily. Classic translation factor GTPase family. EF-G/EF-2 subfamily.

It localises to the cytoplasm. Functionally, catalyzes the GTP-dependent ribosomal translocation step during translation elongation. During this step, the ribosome changes from the pre-translocational (PRE) to the post-translocational (POST) state as the newly formed A-site-bound peptidyl-tRNA and P-site-bound deacylated tRNA move to the P and E sites, respectively. Catalyzes the coordinated movement of the two tRNA molecules, the mRNA and conformational changes in the ribosome. The sequence is that of Elongation factor G (fusA) from Halalkalibacterium halodurans (strain ATCC BAA-125 / DSM 18197 / FERM 7344 / JCM 9153 / C-125) (Bacillus halodurans).